A 295-amino-acid polypeptide reads, in one-letter code: Urease accessory protein UreD (295 aa).

This sequence belongs to the UreD family. As to quaternary structure, ureD, UreF and UreG form a complex that acts as a GTP-hydrolysis-dependent molecular chaperone, activating the urease apoprotein by helping to assemble the nickel containing metallocenter of UreC. The UreE protein probably delivers the nickel.

The protein resides in the cytoplasm. In terms of biological role, required for maturation of urease via the functional incorporation of the urease nickel metallocenter. This is Urease accessory protein UreD from Saccharophagus degradans (strain 2-40 / ATCC 43961 / DSM 17024).